We begin with the raw amino-acid sequence, 656 residues long: Macrolide export ATP-binding/permease protein MacB (656 aa).

The 239-residue stretch at 6–244 folds into the ABC transporter domain; sequence LEVSACYRSF…VKAQVDMSLA (239 aa). Position 42–49 (42–49) interacts with ATP; that stretch reads GASGSGKS. 4 helical membrane-spanning segments follow: residues 277–297, 531–551, 586–606, and 621–641; these read FLTMLGIIIGIASVVSVVALG, LLISAIAVISLVVGGIGVMNI, LVCLCGGALGVALAYLIGVVF, and SIVAAFACSTLIGVLFGFLPA.

The protein belongs to the ABC transporter superfamily. Macrolide exporter (TC 3.A.1.122) family. As to quaternary structure, homodimer. Part of the tripartite efflux system MacAB-TolC, which is composed of an inner membrane transporter, MacB, a periplasmic membrane fusion protein, MacA, and an outer membrane component, TolC. The complex forms a large protein conduit and can translocate molecules across both the inner and outer membranes. Interacts with MacA.

The protein localises to the cell inner membrane. In terms of biological role, part of the tripartite efflux system MacAB-TolC. MacB is a non-canonical ABC transporter that contains transmembrane domains (TMD), which form a pore in the inner membrane, and an ATP-binding domain (NBD), which is responsible for energy generation. Confers resistance against macrolides. This is Macrolide export ATP-binding/permease protein MacB from Shewanella oneidensis (strain ATCC 700550 / JCM 31522 / CIP 106686 / LMG 19005 / NCIMB 14063 / MR-1).